The chain runs to 69 residues: Putative membrane protein insertion efficiency factor (69 aa).

Belongs to the UPF0161 family.

It localises to the cell membrane. Could be involved in insertion of integral membrane proteins into the membrane. This is Putative membrane protein insertion efficiency factor from Desulfitobacterium hafniense (strain Y51).